We begin with the raw amino-acid sequence, 389 residues long: Phospho-N-acetylmuramoyl-pentapeptide-transferase (389 aa).

The next 10 helical transmembrane spans lie at 25–45, 73–93, 97–117, 135–155, 190–210, 222–242, 258–278, 286–306, 311–331, and 366–386; these read RAVM…PWVI, TMGG…WGDL, FIWI…VDDY, FWQS…VSEA, ISYP…IVGA, GLVI…AYVM, GAGE…AFLW, VFMG…VAVI, IVLF…MLQV, and QVVV…LSTL.

It belongs to the glycosyltransferase 4 family. MraY subfamily. Mg(2+) serves as cofactor.

The protein localises to the cell inner membrane. The catalysed reaction is UDP-N-acetyl-alpha-D-muramoyl-L-alanyl-gamma-D-glutamyl-meso-2,6-diaminopimeloyl-D-alanyl-D-alanine + di-trans,octa-cis-undecaprenyl phosphate = di-trans,octa-cis-undecaprenyl diphospho-N-acetyl-alpha-D-muramoyl-L-alanyl-D-glutamyl-meso-2,6-diaminopimeloyl-D-alanyl-D-alanine + UMP. The protein operates within cell wall biogenesis; peptidoglycan biosynthesis. Its function is as follows. Catalyzes the initial step of the lipid cycle reactions in the biosynthesis of the cell wall peptidoglycan: transfers peptidoglycan precursor phospho-MurNAc-pentapeptide from UDP-MurNAc-pentapeptide onto the lipid carrier undecaprenyl phosphate, yielding undecaprenyl-pyrophosphoryl-MurNAc-pentapeptide, known as lipid I. The protein is Phospho-N-acetylmuramoyl-pentapeptide-transferase of Burkholderia pseudomallei (strain 1106a).